The primary structure comprises 334 residues: Ornithine carbamoyltransferase, catabolic (334 aa).

Carbamoyl phosphate-binding positions include 57 to 60, Gln84, Arg108, and 135 to 138; these read STRT and HPTQ. Residues Asn168, Asp232, and 236 to 237 contribute to the L-ornithine site; that span reads SM. Carbamoyl phosphate-binding positions include 274–275 and Arg321; that span reads CL.

Belongs to the aspartate/ornithine carbamoyltransferase superfamily. OTCase family.

The protein localises to the cytoplasm. It catalyses the reaction carbamoyl phosphate + L-ornithine = L-citrulline + phosphate + H(+). Its pathway is amino-acid degradation; L-arginine degradation via ADI pathway; carbamoyl phosphate from L-arginine: step 2/2. Reversibly catalyzes the transfer of the carbamoyl group from carbamoyl phosphate (CP) to the N(epsilon) atom of ornithine (ORN) to produce L-citrulline. This chain is Ornithine carbamoyltransferase, catabolic (arcB), found in Avibacterium paragallinarum (Haemophilus gallinarum).